The chain runs to 207 residues: Elongation factor 1-beta (207 aa).

An N-acetylalanine modification is found at A2. Residues 70 to 96 (FPGIPTSASKEEDDDVDLFGSDEEDEE) are disordered. Positions 80-96 (EEDDDVDLFGSDEEDEE) are enriched in acidic residues. S90 bears the Phosphoserine; by CK2 mark.

This sequence belongs to the EF-1-beta/EF-1-delta family. In terms of assembly, EF-1 is composed of 4 subunits: alpha, beta, delta, and gamma. Post-translationally, phosphorylation affects the GDP/GTP exchange rate.

Functionally, EF-1-beta and EF-1-delta stimulate the exchange of GDP bound to EF-1-alpha to GTP. The protein is Elongation factor 1-beta of Artemia salina (Brine shrimp).